Here is a 420-residue protein sequence, read N- to C-terminus: MKLLVFGISYKTAPISLRERVIFSPENINIALNNLLKKSDILGGVILSTCNRTEVYLSIKNFYKAKKIIILWLYKFFNDLKIKEIKNNFYSYIDNYAVSHLMRVTSGLDSMILGEHQILSQVKSAFFRSLKNKNISIDLQKLFESAFSVAKKIRSETKIGSYSISIPYIICVLLKKIFISFTEIKVMLIGSGTINELIAKQLFKYKIKDLFISNRTIDHAKNLAIKVNGCVVEFNEIFKNLNKMQVIITSTYSRKLIITYKIIKSIIEKNKNKKIIFIDISIPRNIDKKIKKITGVHLYTLEDLKDLITNNLEKRKNAATLAENIIKKESIKFMSHIKGYYSSEIIKKYRFQINKLKKIYEKKALLELKLGNNPENIIKKLTYKLTNRLVHKPTKLLYNTSCSKNNKDLYDLYNKLKIDL.

Substrate-binding positions include 49 to 52 (TCNR), Ser-110, 115 to 117 (EHQ), and Gln-121. Cys-50 (nucleophile) is an active-site residue. 190-195 (GSGTIN) is a binding site for NADP(+).

Belongs to the glutamyl-tRNA reductase family. Homodimer.

It catalyses the reaction (S)-4-amino-5-oxopentanoate + tRNA(Glu) + NADP(+) = L-glutamyl-tRNA(Glu) + NADPH + H(+). It functions in the pathway porphyrin-containing compound metabolism; protoporphyrin-IX biosynthesis; 5-aminolevulinate from L-glutamyl-tRNA(Glu): step 1/2. In terms of biological role, catalyzes the NADPH-dependent reduction of glutamyl-tRNA(Glu) to glutamate 1-semialdehyde (GSA). The sequence is that of Glutamyl-tRNA reductase from Wigglesworthia glossinidia brevipalpis.